The following is a 364-amino-acid chain: Protein RecA (364 aa).

An ATP-binding site is contributed by 77 to 84 (GPESSGKT). The interval 343–364 (DRFLQNGGPDPDDGDGDATAEM) is disordered. Acidic residues predominate over residues 352–364 (DPDDGDGDATAEM).

This sequence belongs to the RecA family.

It is found in the cytoplasm. Its function is as follows. Can catalyze the hydrolysis of ATP in the presence of single-stranded DNA, the ATP-dependent uptake of single-stranded DNA by duplex DNA, and the ATP-dependent hybridization of homologous single-stranded DNAs. It interacts with LexA causing its activation and leading to its autocatalytic cleavage. This is Protein RecA from Rhizobium johnstonii (strain DSM 114642 / LMG 32736 / 3841) (Rhizobium leguminosarum bv. viciae).